The following is a 100-amino-acid chain: Large ribosomal subunit protein uL23 (100 aa).

It belongs to the universal ribosomal protein uL23 family. In terms of assembly, part of the 50S ribosomal subunit. Contacts protein L29, and trigger factor when it is bound to the ribosome.

One of the early assembly proteins it binds 23S rRNA. One of the proteins that surrounds the polypeptide exit tunnel on the outside of the ribosome. Forms the main docking site for trigger factor binding to the ribosome. This chain is Large ribosomal subunit protein uL23, found in Lacticaseibacillus casei (strain BL23) (Lactobacillus casei).